We begin with the raw amino-acid sequence, 301 residues long: Protoheme IX farnesyltransferase (301 aa).

9 helical membrane-spanning segments follow: residues 29-49 (VVAL…PGVV), 51-71 (IVPL…AAAF), 96-118 (VSIA…VLYV), 123-143 (LTAW…TAYL), 151-171 (IVVG…AVTG), 177-197 (ALLL…ALAI), 223-243 (CIFL…LVGM), 244-264 (CGPV…YKAW), and 281-301 (FSIY…YLWL).

The protein belongs to the UbiA prenyltransferase family. Protoheme IX farnesyltransferase subfamily.

Its subcellular location is the cell inner membrane. It catalyses the reaction heme b + (2E,6E)-farnesyl diphosphate + H2O = Fe(II)-heme o + diphosphate. It functions in the pathway porphyrin-containing compound metabolism; heme O biosynthesis; heme O from protoheme: step 1/1. Converts heme B (protoheme IX) to heme O by substitution of the vinyl group on carbon 2 of heme B porphyrin ring with a hydroxyethyl farnesyl side group. The protein is Protoheme IX farnesyltransferase of Shewanella halifaxensis (strain HAW-EB4).